Here is a 443-residue protein sequence, read N- to C-terminus: ATP-dependent protease ATPase subunit HslU (443 aa).

ATP-binding positions include Ile18, 60–65 (GVGKTE), Asp256, Glu321, and Arg393.

The protein belongs to the ClpX chaperone family. HslU subfamily. A double ring-shaped homohexamer of HslV is capped on each side by a ring-shaped HslU homohexamer. The assembly of the HslU/HslV complex is dependent on binding of ATP.

It is found in the cytoplasm. Its function is as follows. ATPase subunit of a proteasome-like degradation complex; this subunit has chaperone activity. The binding of ATP and its subsequent hydrolysis by HslU are essential for unfolding of protein substrates subsequently hydrolyzed by HslV. HslU recognizes the N-terminal part of its protein substrates and unfolds these before they are guided to HslV for hydrolysis. The polypeptide is ATP-dependent protease ATPase subunit HslU (Buchnera aphidicola subsp. Schizaphis graminum (strain Sg)).